The primary structure comprises 80 residues: Acyl carrier protein (80 aa).

Positions 4 to 79 (DEIFSKVRSI…DVVNFIKKRK (76 aa)) constitute a Carrier domain. An O-(pantetheine 4'-phosphoryl)serine modification is found at Ser39.

The protein belongs to the acyl carrier protein (ACP) family. In terms of processing, 4'-phosphopantetheine is transferred from CoA to a specific serine of apo-ACP by AcpS. This modification is essential for activity because fatty acids are bound in thioester linkage to the sulfhydryl of the prosthetic group.

The protein localises to the cytoplasm. The protein operates within lipid metabolism; fatty acid biosynthesis. Functionally, carrier of the growing fatty acid chain in fatty acid biosynthesis. In Borreliella burgdorferi (strain ATCC 35210 / DSM 4680 / CIP 102532 / B31) (Borrelia burgdorferi), this protein is Acyl carrier protein.